Consider the following 554-residue polypeptide: Chaperonin GroEL (554 aa).

ATP-binding positions include 30 to 33 (TLGP), lysine 51, 87 to 91 (DGTTT), glycine 415, 478 to 480 (DAA), and aspartate 494.

The protein belongs to the chaperonin (HSP60) family. Forms a cylinder of 14 subunits composed of two heptameric rings stacked back-to-back. Interacts with the co-chaperonin GroES.

It is found in the cytoplasm. The enzyme catalyses ATP + H2O + a folded polypeptide = ADP + phosphate + an unfolded polypeptide.. Its function is as follows. Together with its co-chaperonin GroES, plays an essential role in assisting protein folding. The GroEL-GroES system forms a nano-cage that allows encapsulation of the non-native substrate proteins and provides a physical environment optimized to promote and accelerate protein folding. This chain is Chaperonin GroEL, found in Pelobacter propionicus (strain DSM 2379 / NBRC 103807 / OttBd1).